Consider the following 308-residue polypeptide: Putative glutamine amidotransferase Rv2859c (308 aa).

Residues 1–62 are disordered; it reads MDLSASRSDG…ASPRLRSPLG (62 aa). Low complexity-rich tracts occupy residues 13–24, 31–42, and 49–61; these read PLRPASPRLRSP and PLRPASPRLRSPL. A Glutamine amidotransferase type-1 domain is found at 78–301; the sequence is RTGVWDIPAG…VDAASGYAGR (224 aa). The active-site Nucleophile is the Cys-177. Active-site residues include His-277 and Glu-279. Residue Lys-289 forms an Isoglutamyl lysine isopeptide (Lys-Gln) (interchain with Q-Cter in protein Pup) linkage.

This is Putative glutamine amidotransferase Rv2859c from Mycobacterium tuberculosis (strain ATCC 25618 / H37Rv).